We begin with the raw amino-acid sequence, 494 residues long: UDP-N-acetylmuramoyl-L-alanyl-D-glutamate--L-lysine ligase (494 aa).

Residue serine 30 coordinates UDP-N-acetyl-alpha-D-muramoyl-L-alanyl-D-glutamate. ATP is bound at residue 110–116 (GTNGKTS). Residues 152-153 (TT), serine 179, and arginine 187 contribute to the UDP-N-acetyl-alpha-D-muramoyl-L-alanyl-D-glutamate site. An N6-carboxylysine modification is found at lysine 219. Positions 406–409 (DNPA) match the L-lysine recognition motif motif.

Belongs to the MurCDEF family. MurE subfamily. In terms of processing, carboxylation is probably crucial for Mg(2+) binding and, consequently, for the gamma-phosphate positioning of ATP.

It localises to the cytoplasm. It catalyses the reaction UDP-N-acetyl-alpha-D-muramoyl-L-alanyl-D-glutamate + L-lysine + ATP = UDP-N-acetyl-alpha-D-muramoyl-L-alanyl-gamma-D-glutamyl-L-lysine + ADP + phosphate + H(+). Its pathway is cell wall biogenesis; peptidoglycan biosynthesis. Catalyzes the addition of L-lysine to the nucleotide precursor UDP-N-acetylmuramoyl-L-alanyl-D-glutamate (UMAG) in the biosynthesis of bacterial cell-wall peptidoglycan. This is UDP-N-acetylmuramoyl-L-alanyl-D-glutamate--L-lysine ligase from Staphylococcus aureus (strain Mu3 / ATCC 700698).